Here is a 438-residue protein sequence, read N- to C-terminus: Adenylosuccinate synthetase (438 aa).

GTP contacts are provided by residues 13–19 (GDEGKGK) and 41–43 (GHT). Catalysis depends on Asp14, which acts as the Proton acceptor. Residues Asp14 and Gly41 each coordinate Mg(2+). IMP is bound by residues 14–17 (DEGK), 39–42 (NAGH), Thr130, Arg144, Gln225, Thr240, and Arg310. His42 (proton donor) is an active-site residue. 306 to 312 (ATTGRLR) is a binding site for substrate. GTP contacts are provided by residues Arg312, 338–340 (KLD), and 421–423 (STG).

This sequence belongs to the adenylosuccinate synthetase family. In terms of assembly, homodimer. Mg(2+) is required as a cofactor.

Its subcellular location is the cytoplasm. It carries out the reaction IMP + L-aspartate + GTP = N(6)-(1,2-dicarboxyethyl)-AMP + GDP + phosphate + 2 H(+). Its pathway is purine metabolism; AMP biosynthesis via de novo pathway; AMP from IMP: step 1/2. Functionally, plays an important role in the de novo pathway of purine nucleotide biosynthesis. Catalyzes the first committed step in the biosynthesis of AMP from IMP. This Aliivibrio fischeri (strain ATCC 700601 / ES114) (Vibrio fischeri) protein is Adenylosuccinate synthetase.